Here is a 237-residue protein sequence, read N- to C-terminus: Putative biotin ligase (237 aa).

In terms of domain architecture, BPL/LPL catalytic spans 1–191 (MEIIHLSEID…KKYKKYSITI (191 aa)).

The protein belongs to the biotin--protein ligase family.

It carries out the reaction biotin + L-lysyl-[protein] + ATP = N(6)-biotinyl-L-lysyl-[protein] + AMP + diphosphate + H(+). The polypeptide is Putative biotin ligase (Methanocaldococcus jannaschii (strain ATCC 43067 / DSM 2661 / JAL-1 / JCM 10045 / NBRC 100440) (Methanococcus jannaschii)).